The sequence spans 306 residues: Aspartate carbamoyltransferase catalytic subunit (306 aa).

Carbamoyl phosphate-binding residues include arginine 51 and threonine 52. Residue lysine 80 participates in L-aspartate binding. Carbamoyl phosphate-binding residues include arginine 101, histidine 129, and glutamine 132. Residues arginine 162 and arginine 224 each coordinate L-aspartate. The carbamoyl phosphate site is built by leucine 263 and proline 264.

The protein belongs to the aspartate/ornithine carbamoyltransferase superfamily. ATCase family. In terms of assembly, heterododecamer (2C3:3R2) of six catalytic PyrB chains organized as two trimers (C3), and six regulatory PyrI chains organized as three dimers (R2).

The catalysed reaction is carbamoyl phosphate + L-aspartate = N-carbamoyl-L-aspartate + phosphate + H(+). It participates in pyrimidine metabolism; UMP biosynthesis via de novo pathway; (S)-dihydroorotate from bicarbonate: step 2/3. Catalyzes the condensation of carbamoyl phosphate and aspartate to form carbamoyl aspartate and inorganic phosphate, the committed step in the de novo pyrimidine nucleotide biosynthesis pathway. This is Aspartate carbamoyltransferase catalytic subunit from Parabacteroides distasonis (strain ATCC 8503 / DSM 20701 / CIP 104284 / JCM 5825 / NCTC 11152).